A 304-amino-acid chain; its full sequence is Murein tetrapeptide carboxypeptidase (304 aa).

Ser-106 (nucleophile) is an active-site residue. Catalysis depends on charge relay system residues Glu-200 and His-270.

This sequence belongs to the peptidase S66 family.

It localises to the cytoplasm. The enzyme catalyses N-acetyl-D-glucosaminyl-N-acetylmuramoyl-L-alanyl-meso-2,6-diaminoheptanedioyl-D-alanine + H2O = N-acetyl-D-glucosaminyl-N-acetylmuramoyl-L-alanyl-meso-2,6-diaminoheptanedioate + D-alanine. It participates in cell wall biogenesis; peptidoglycan recycling. With respect to regulation, inhibited by beta-lactams containing a D-amino acid side chain. Functionally, releases the terminal D-alanine residue from the cytoplasmic tetrapeptide recycling product L-Ala-gamma-D-Glu-meso-Dap-D-Ala. To a lesser extent, can also cleave D-Ala from murein derivatives containing the tetrapeptide, i.e. MurNAc-tetrapeptide, UDP-MurNAc-tetrapeptide, GlcNAc-MurNAc-tetrapeptide, and GlcNAc-anhMurNAc-tetrapeptide. Does not act on murein sacculi or cross-linked muropeptides. The tripeptides produced by the LcdA reaction can then be reused as peptidoglycan building blocks; LcdA is thereby involved in murein recycling. Is also essential for viability during stationary phase. This chain is Murein tetrapeptide carboxypeptidase (ldcA), found in Escherichia coli (strain K12).